A 394-amino-acid polypeptide reads, in one-letter code: Actin-related protein 2-A (394 aa).

Residues 160–162 (GDG), 214–218 (RMIKE), and 305–310 (GGSTMY) each bind ATP.

It belongs to the actin family. ARP2 subfamily. In terms of assembly, component of the Arp2/3 complex composed of actr2/arp2, actr3/arp3, arpc1 (arpc1a or arpc1b), arpc2, arpc3, arpc4 and arpc5.

The protein localises to the cytoplasm. The protein resides in the cytoskeleton. Its subcellular location is the cell projection. It is found in the nucleus. Functionally, ATP-binding component of the Arp2/3 complex, a multiprotein complex that mediates actin polymerization upon stimulation by nucleation-promoting factor (NPF). The Arp2/3 complex mediates the formation of branched actin networks in the cytoplasm, providing the force for cell motility. Seems to contact the pointed end of the daughter actin filament. In addition to its role in the cytoplasmic cytoskeleton, the Arp2/3 complex also promotes actin polymerization in the nucleus, thereby regulating gene transcription and repair of damaged DNA. The Arp2/3 complex promotes homologous recombination (HR) repair in response to DNA damage by promoting nuclear actin polymerization, leading to drive motility of double-strand breaks (DSBs). The polypeptide is Actin-related protein 2-A (actr2-a) (Xenopus laevis (African clawed frog)).